Here is a 391-residue protein sequence, read N- to C-terminus: Pectate lyase D (391 aa).

The signal sequence occupies residues 1–31 (MNNTRVSFRSTKSLLAAIIATSMMTWSVNRA). Ca(2+) contacts are provided by Asp170 and Asp213. Arg266 is an active-site residue.

This sequence belongs to the polysaccharide lyase 1 family. PLBC subfamily. Ca(2+) serves as cofactor.

It is found in the secreted. It carries out the reaction Eliminative cleavage of (1-&gt;4)-alpha-D-galacturonan to give oligosaccharides with 4-deoxy-alpha-D-galact-4-enuronosyl groups at their non-reducing ends.. The protein operates within glycan metabolism; pectin degradation; 2-dehydro-3-deoxy-D-gluconate from pectin: step 2/5. In terms of biological role, involved in maceration and soft-rotting of plant tissue. The sequence is that of Pectate lyase D (pelD) from Dickeya chrysanthemi (Pectobacterium chrysanthemi).